A 121-amino-acid chain; its full sequence is MMSMRSRRSMFIEHFNELMMRVQRPPTLLLILLVANAFSKPIGTPMPEHCSTLVGREFQSCIRQAQFDTAGMYTNRVIVLDRARTHRYPIDRDTTTAHDTSYDTSDPQLLSDIGYSFDYGK.

The signal sequence occupies residues 1-39 (MMSMRSRRSMFIEHFNELMMRVQRPPTLLLILLVANAFS).

This Bat coronavirus HKU5 (BtCoV) protein is Non-structural protein 3a.